A 358-amino-acid chain; its full sequence is Nicotinate-nucleotide--dimethylbenzimidazole phosphoribosyltransferase (358 aa).

The active-site Proton acceptor is E313.

Belongs to the CobT family.

It catalyses the reaction 5,6-dimethylbenzimidazole + nicotinate beta-D-ribonucleotide = alpha-ribazole 5'-phosphate + nicotinate + H(+). Its pathway is nucleoside biosynthesis; alpha-ribazole biosynthesis; alpha-ribazole from 5,6-dimethylbenzimidazole: step 1/2. Functionally, catalyzes the synthesis of alpha-ribazole-5'-phosphate from nicotinate mononucleotide (NAMN) and 5,6-dimethylbenzimidazole (DMB). The sequence is that of Nicotinate-nucleotide--dimethylbenzimidazole phosphoribosyltransferase from Corynebacterium glutamicum (strain ATCC 13032 / DSM 20300 / JCM 1318 / BCRC 11384 / CCUG 27702 / LMG 3730 / NBRC 12168 / NCIMB 10025 / NRRL B-2784 / 534).